The chain runs to 216 residues: DDB1- and CUL4-associated factor 16 (216 aa).

A disordered region spans residues 1–42 (MGPRNPSPDHLSESESEEEENISYLNESSGEEWDSSEEEDSM). Acidic residues predominate over residues 29–41 (SGEEWDSSEEEDS). K61 is modified (N6-acetyllysine).

As to quaternary structure, interacts with DDB1 and CUL4A.

The protein resides in the nucleus. It participates in protein modification; protein ubiquitination. Its function is as follows. Functions as a substrate recognition component for CUL4-DDB1 E3 ubiquitin-protein ligase complex, which mediates ubiquitination and proteasome-dependent degradation of nuclear proteins. The chain is DDB1- and CUL4-associated factor 16 from Homo sapiens (Human).